The primary structure comprises 780 residues: Alpha-xylosidase (780 aa).

Asn48, Asn84, Asn247, and Asn298 each carry an N-linked (GlcNAc...) asparagine glycan. Residues Asp434 and Glu437 contribute to the active site. N-linked (GlcNAc...) asparagine glycosylation is present at Asn443. The active-site Proton donor is Asp501. N-linked (GlcNAc...) asparagine glycosylation is present at Asn718.

It belongs to the glycosyl hydrolase 31 family.

It localises to the secreted. The catalysed reaction is Hydrolysis of terminal, non-reducing alpha-D-xylose residues with release of alpha-D-xylose.. Catalyzes the liberation of alpha-xylose from the non-reducing terminal glucose of xyloglucan oligosaccharides. The sequence is that of Alpha-xylosidase from Emericella nidulans (strain FGSC A4 / ATCC 38163 / CBS 112.46 / NRRL 194 / M139) (Aspergillus nidulans).